Consider the following 241-residue polypeptide: Adapter protein MecA (241 aa).

The disordered stretch occupies residues 77 to 102 (KNTDEDDVADESQGDASVDSEHPDQV). Residues 80–89 (DEDDVADESQ) show a composition bias toward acidic residues.

It belongs to the MecA family. As to quaternary structure, homodimer.

In terms of biological role, enables the recognition and targeting of unfolded and aggregated proteins to the ClpC protease or to other proteins involved in proteolysis. In Levilactobacillus brevis (strain ATCC 367 / BCRC 12310 / CIP 105137 / JCM 1170 / LMG 11437 / NCIMB 947 / NCTC 947) (Lactobacillus brevis), this protein is Adapter protein MecA.